A 907-amino-acid chain; its full sequence is Protein translocase subunit SecA (907 aa).

Residues Gln87, 105–109, and Asp512 contribute to the ATP site; that span reads GEGKT. The tract at residues 870–897 is disordered; sequence AALAATQPQVREGEKVGRNDPCPCGSGK. The Zn(2+) site is built by Cys891, Cys893, Cys902, and His903.

This sequence belongs to the SecA family. As to quaternary structure, monomer and homodimer. Part of the essential Sec protein translocation apparatus which comprises SecA, SecYEG and auxiliary proteins SecDF-YajC and YidC. The cofactor is Zn(2+).

Its subcellular location is the cell inner membrane. The protein resides in the cytoplasm. It catalyses the reaction ATP + H2O + cellular proteinSide 1 = ADP + phosphate + cellular proteinSide 2.. Functionally, part of the Sec protein translocase complex. Interacts with the SecYEG preprotein conducting channel. Has a central role in coupling the hydrolysis of ATP to the transfer of proteins into and across the cell membrane, serving both as a receptor for the preprotein-SecB complex and as an ATP-driven molecular motor driving the stepwise translocation of polypeptide chains across the membrane. This is Protein translocase subunit SecA from Shewanella piezotolerans (strain WP3 / JCM 13877).